Here is a 552-residue protein sequence, read N- to C-terminus: Dihydroxy-acid dehydratase (552 aa).

Cys46 lines the [2Fe-2S] cluster pocket. Asp78 is a binding site for Mg(2+). Residue Cys119 participates in [2Fe-2S] cluster binding. Positions 120 and 121 each coordinate Mg(2+). At Lys121 the chain carries N6-carboxylysine. Cys191 provides a ligand contact to [2Fe-2S] cluster. Glu442 serves as a coordination point for Mg(2+). The Proton acceptor role is filled by Ser468.

This sequence belongs to the IlvD/Edd family. As to quaternary structure, homodimer. The cofactor is [2Fe-2S] cluster. Mg(2+) is required as a cofactor.

It catalyses the reaction (2R)-2,3-dihydroxy-3-methylbutanoate = 3-methyl-2-oxobutanoate + H2O. The catalysed reaction is (2R,3R)-2,3-dihydroxy-3-methylpentanoate = (S)-3-methyl-2-oxopentanoate + H2O. The protein operates within amino-acid biosynthesis; L-isoleucine biosynthesis; L-isoleucine from 2-oxobutanoate: step 3/4. Its pathway is amino-acid biosynthesis; L-valine biosynthesis; L-valine from pyruvate: step 3/4. Functions in the biosynthesis of branched-chain amino acids. Catalyzes the dehydration of (2R,3R)-2,3-dihydroxy-3-methylpentanoate (2,3-dihydroxy-3-methylvalerate) into 2-oxo-3-methylpentanoate (2-oxo-3-methylvalerate) and of (2R)-2,3-dihydroxy-3-methylbutanoate (2,3-dihydroxyisovalerate) into 2-oxo-3-methylbutanoate (2-oxoisovalerate), the penultimate precursor to L-isoleucine and L-valine, respectively. The chain is Dihydroxy-acid dehydratase from Picrophilus torridus (strain ATCC 700027 / DSM 9790 / JCM 10055 / NBRC 100828 / KAW 2/3).